A 156-amino-acid chain; its full sequence is ATP synthase subunit b (156 aa).

A helical membrane pass occupies residues Leu7–Pro27.

Belongs to the ATPase B chain family. F-type ATPases have 2 components, F(1) - the catalytic core - and F(0) - the membrane proton channel. F(1) has five subunits: alpha(3), beta(3), gamma(1), delta(1), epsilon(1). F(0) has three main subunits: a(1), b(2) and c(10-14). The alpha and beta chains form an alternating ring which encloses part of the gamma chain. F(1) is attached to F(0) by a central stalk formed by the gamma and epsilon chains, while a peripheral stalk is formed by the delta and b chains.

The protein localises to the cell inner membrane. F(1)F(0) ATP synthase produces ATP from ADP in the presence of a proton or sodium gradient. F-type ATPases consist of two structural domains, F(1) containing the extramembraneous catalytic core and F(0) containing the membrane proton channel, linked together by a central stalk and a peripheral stalk. During catalysis, ATP synthesis in the catalytic domain of F(1) is coupled via a rotary mechanism of the central stalk subunits to proton translocation. Functionally, component of the F(0) channel, it forms part of the peripheral stalk, linking F(1) to F(0). The chain is ATP synthase subunit b from Shewanella sp. (strain MR-4).